The chain runs to 318 residues: B3 domain-containing protein At1g05930 (318 aa).

The segment at residues 201 to 293 (FNRLISNDFL…VLCFAMRQWR (93 aa)) is a DNA-binding region (TF-B3).

The protein resides in the nucleus. This chain is B3 domain-containing protein At1g05930, found in Arabidopsis thaliana (Mouse-ear cress).